A 253-amino-acid chain; its full sequence is 3-deoxy-manno-octulosonate cytidylyltransferase (253 aa).

The protein belongs to the KdsB family.

Its subcellular location is the cytoplasm. It catalyses the reaction 3-deoxy-alpha-D-manno-oct-2-ulosonate + CTP = CMP-3-deoxy-beta-D-manno-octulosonate + diphosphate. It functions in the pathway nucleotide-sugar biosynthesis; CMP-3-deoxy-D-manno-octulosonate biosynthesis; CMP-3-deoxy-D-manno-octulosonate from 3-deoxy-D-manno-octulosonate and CTP: step 1/1. Its pathway is bacterial outer membrane biogenesis; lipopolysaccharide biosynthesis. In terms of biological role, activates KDO (a required 8-carbon sugar) for incorporation into bacterial lipopolysaccharide in Gram-negative bacteria. This is 3-deoxy-manno-octulosonate cytidylyltransferase from Neisseria meningitidis serogroup C (strain 053442).